Consider the following 125-residue polypeptide: U-scoloptoxin(05)-Er1a (125 aa).

The N-terminal stretch at 1–20 is a signal peptide; sequence MLSLGVSIFLLVFLIPENSG.

Belongs to the scoloptoxin-05 family. In terms of processing, contains 4 disulfide bonds. In terms of tissue distribution, expressed by the venom gland.

It is found in the secreted. The polypeptide is U-scoloptoxin(05)-Er1a (Ethmostigmus rubripes (Giant centipede)).